The chain runs to 157 residues: SsrA-binding protein (157 aa).

Positions leucine 133–glycine 157 are disordered. Residues aspartate 135 to arginine 151 show a composition bias toward basic and acidic residues.

It belongs to the SmpB family.

The protein localises to the cytoplasm. Required for rescue of stalled ribosomes mediated by trans-translation. Binds to transfer-messenger RNA (tmRNA), required for stable association of tmRNA with ribosomes. tmRNA and SmpB together mimic tRNA shape, replacing the anticodon stem-loop with SmpB. tmRNA is encoded by the ssrA gene; the 2 termini fold to resemble tRNA(Ala) and it encodes a 'tag peptide', a short internal open reading frame. During trans-translation Ala-aminoacylated tmRNA acts like a tRNA, entering the A-site of stalled ribosomes, displacing the stalled mRNA. The ribosome then switches to translate the ORF on the tmRNA; the nascent peptide is terminated with the 'tag peptide' encoded by the tmRNA and targeted for degradation. The ribosome is freed to recommence translation, which seems to be the essential function of trans-translation. This is SsrA-binding protein from Afipia carboxidovorans (strain ATCC 49405 / DSM 1227 / KCTC 32145 / OM5) (Oligotropha carboxidovorans).